A 152-amino-acid chain; its full sequence is SsrA-binding protein (152 aa).

Positions 129-140 (KREDMKKKDSQR) are enriched in basic and acidic residues. The segment at 129-152 (KREDMKKKDSQRELSQALKSKNRE) is disordered. Over residues 141-152 (ELSQALKSKNRE) the composition is skewed to polar residues.

This sequence belongs to the SmpB family.

The protein resides in the cytoplasm. Functionally, required for rescue of stalled ribosomes mediated by trans-translation. Binds to transfer-messenger RNA (tmRNA), required for stable association of tmRNA with ribosomes. tmRNA and SmpB together mimic tRNA shape, replacing the anticodon stem-loop with SmpB. tmRNA is encoded by the ssrA gene; the 2 termini fold to resemble tRNA(Ala) and it encodes a 'tag peptide', a short internal open reading frame. During trans-translation Ala-aminoacylated tmRNA acts like a tRNA, entering the A-site of stalled ribosomes, displacing the stalled mRNA. The ribosome then switches to translate the ORF on the tmRNA; the nascent peptide is terminated with the 'tag peptide' encoded by the tmRNA and targeted for degradation. The ribosome is freed to recommence translation, which seems to be the essential function of trans-translation. The polypeptide is SsrA-binding protein (Pelobacter propionicus (strain DSM 2379 / NBRC 103807 / OttBd1)).